Reading from the N-terminus, the 757-residue chain is MLQRFITSLMLLPFPGSALAALQNQDAPQHMTCTVAQPTESMIGAVQLQKTEAGTIGVESRSAEILANEKAYFTGNVIIQRNGQWLSTSKATIDQQRGEILASDGITFNDGYLSVTGDSLSLDLNDDQAKLYNSDYRLQNHNARGHAELLSLSRQEVLLQDSSFTTCPGETPAWQLRAERIEINETSDFGEAWHARFELFDVPVLYLPYFNFPLSDARKTGLLYPTFDSSSNSGFEVEVPYYFNIAPNMDATIAPVYMSERGTMMKGEYRYLFEQNAGQFNLEYLGNDDTRIANKKRYLWHVQHSAQINQDLSFYLDATEISDDNYLNDFGSDFAGRADTHLYRVAQLDYDNENWTAQLRTEDYELIGDYRSPYRTLPQLSIDYNTGDFTGFSASLYNELTYFQNQDQTREYATRAHIEPSIQYRFEKPAFDTEAELSYLYTRYWQESPDANITEEVTRTLPRARVRARLHLERAIELGDSQYRQTLSPQIQYLYVPYENQQNIGIYDTSLLQDDYHGLFRSRRFSGLDRIAEANQITYGVSSSLFTQNEREVLRASIGQIYNINDSRTQLFASDEETTTSSNSEWVADINWAVDENWSIRSSIQYDTELNTTRKSQTAVEFRKDESNLIQVSHRTATNILNNDIEQVGTQAVWSANSRWQVASNVFYDLTHDRLNDAMVGIQYSSCCWALRVSAYRRINRDLEPAFSATQINGETQFDNGISIQFIISGLASDSSGLINMLEKSTYGYRRPFYLSN.

Residues 1–20 (MLQRFITSLMLLPFPGSALA) form the signal peptide.

Belongs to the LptD family. As to quaternary structure, component of the lipopolysaccharide transport and assembly complex. Interacts with LptE and LptA.

Its subcellular location is the cell outer membrane. In terms of biological role, together with LptE, is involved in the assembly of lipopolysaccharide (LPS) at the surface of the outer membrane. This is LPS-assembly protein LptD from Idiomarina loihiensis (strain ATCC BAA-735 / DSM 15497 / L2-TR).